Here is a 198-residue protein sequence, read N- to C-terminus: Na(+)-translocating NADH-quinone reductase subunit E (198 aa).

Transmembrane regions (helical) follow at residues 11-31, 35-55, 77-97, 109-129, 140-160, and 176-196; these read AVFI…FLAV, VTTA…SVPA, FLNF…LEMI, LGIF…VSFM, IVYG…LASI, and LGIT…FSGV.

Belongs to the NqrDE/RnfAE family. Composed of six subunits; NqrA, NqrB, NqrC, NqrD, NqrE and NqrF.

The protein localises to the cell inner membrane. The catalysed reaction is a ubiquinone + n Na(+)(in) + NADH + H(+) = a ubiquinol + n Na(+)(out) + NAD(+). In terms of biological role, NQR complex catalyzes the reduction of ubiquinone-1 to ubiquinol by two successive reactions, coupled with the transport of Na(+) ions from the cytoplasm to the periplasm. NqrA to NqrE are probably involved in the second step, the conversion of ubisemiquinone to ubiquinol. This is Na(+)-translocating NADH-quinone reductase subunit E from Photorhabdus laumondii subsp. laumondii (strain DSM 15139 / CIP 105565 / TT01) (Photorhabdus luminescens subsp. laumondii).